A 306-amino-acid polypeptide reads, in one-letter code: Ribonuclease Z (306 aa).

Residues His63, His65, Asp67, His68, His140, Asp211, and His269 each coordinate Zn(2+). The active-site Proton acceptor is Asp67.

It belongs to the RNase Z family. As to quaternary structure, homodimer. It depends on Zn(2+) as a cofactor.

The enzyme catalyses Endonucleolytic cleavage of RNA, removing extra 3' nucleotides from tRNA precursor, generating 3' termini of tRNAs. A 3'-hydroxy group is left at the tRNA terminus and a 5'-phosphoryl group is left at the trailer molecule.. In terms of biological role, zinc phosphodiesterase, which displays some tRNA 3'-processing endonuclease activity. Probably involved in tRNA maturation, by removing a 3'-trailer from precursor tRNA. This chain is Ribonuclease Z, found in Listeria monocytogenes serovar 1/2a (strain ATCC BAA-679 / EGD-e).